Consider the following 568-residue polypeptide: Potassium-transporting ATPase potassium-binding subunit (568 aa).

Helical transmembrane passes span 7–27, 65–85, 135–155, 177–197, 254–274, 286–306, 383–403, 422–442, 489–509, and 530–550; these read AEIAFILGLTVALGWPLGLFL, SYALALLAFSAASFILLYAIL, AGLTSHNFLSAAAGIAVAAAV, VSLYLLLPLSIVIALVFVALG, LTNLIEIVEMNVLGFACVVAF, ALITVMAIFVAVAASVIYWTE, GLYGMIVLALIAVFVAGLMVG, MLAVLILPLAILGFSAAAAVL, LGIAMLLGRFGYVIPVLAIAG, and LFIGLLIGVILILGGLQFFPA.

This sequence belongs to the KdpA family. The system is composed of three essential subunits: KdpA, KdpB and KdpC.

It localises to the cell inner membrane. Functionally, part of the high-affinity ATP-driven potassium transport (or Kdp) system, which catalyzes the hydrolysis of ATP coupled with the electrogenic transport of potassium into the cytoplasm. This subunit binds the periplasmic potassium ions and delivers the ions to the membrane domain of KdpB through an intramembrane tunnel. The sequence is that of Potassium-transporting ATPase potassium-binding subunit from Beijerinckia indica subsp. indica (strain ATCC 9039 / DSM 1715 / NCIMB 8712).